The following is a 161-amino-acid chain: Large ribosomal subunit protein bL9 (161 aa).

The protein belongs to the bacterial ribosomal protein bL9 family.

Functionally, binds to the 23S rRNA. The chain is Large ribosomal subunit protein bL9 from Blochmanniella floridana.